The following is a 53-amino-acid chain: Small ribosomal subunit protein uS14m (53 aa).

This sequence belongs to the universal ribosomal protein uS14 family.

The protein resides in the mitochondrion. The polypeptide is Small ribosomal subunit protein uS14m (RPS14) (Bigelowiella natans (Pedinomonas minutissima)).